Reading from the N-terminus, the 376-residue chain is MTKSLPGVADLRLGANHPRMWTRRVQGTVVNVGVKVLPWIPTPAKRILSAGRSVIIDGNTLDPTLQLMLSTSRIFGVDGLAVDDDIVASRAHMRAICEAMPGPQIHVDVTDLSIPGPAGEIPARHYRPSGGGATPLLVFYHGGGWTLGDLDTHDALCRLTCRDADIQVLSIDYRLAPEHPAPAAVEDAYAAFVWAHEHASDEFGALPGRVAVGGDSAGGNLSAVVCQLARDKARYEGGPTPVLQWLLYPRTDFTAQTRSMGLFGNGFLLTKRDIDWFHTQYLRDSDVDPADPRLSPLLAESLSGLAPALIAVAGFDPLRDEGESYAKALRAAGTAVDLRYLGSLTHGFLNLFQLGGGSAAGTNELISALRAHLSRV.

Residues Ser-216, Asp-316, and His-346 contribute to the active site.

The protein belongs to the 'GDXG' lipolytic enzyme family.

It is found in the cytoplasm. It catalyses the reaction a carboxylic ester + H2O = an alcohol + a carboxylate + H(+). The enzyme catalyses an acetyl ester + H2O = an aliphatic alcohol + acetate + H(+). It carries out the reaction a butanoate ester + H2O = an aliphatic alcohol + butanoate + H(+). The catalysed reaction is an octanoate ester + H2O = an aliphatic alcohol + octanoate + H(+). It catalyses the reaction decanoate ester + H2O = decanoate + an aliphatic alcohol + H(+). The enzyme catalyses a dodecanoate ester + H2O = an aliphatic alcohol + dodecanoate + H(+). It carries out the reaction 1,2,3-tributanoylglycerol + H2O = dibutanoylglycerol + butanoate + H(+). The catalysed reaction is 4-acetoxyphenol + H2O = hydroquinone + acetate + H(+). Its activity is regulated as follows. Completely inhibited by tetrahydrolipstatin (THL), RHC-80267 and N-bromosuccinimide. Non specific carboxylic ester hydrolase. Hydrolyzes various pNP-esters, with a preference for short carbon chain substrates. Can also hydrolyze tributyrin to di- and monobutyrin and 4-hydroxyphenylacetate to hydroquinone. This chain is Carboxylic ester hydrolase LipN, found in Mycobacterium tuberculosis (strain ATCC 25618 / H37Rv).